The chain runs to 331 residues: Glycerol-3-phosphate dehydrogenase [NAD(P)+] (331 aa).

NADPH contacts are provided by Trp11, Arg30, and Lys105. The sn-glycerol 3-phosphate site is built by Lys105, Gly134, and Ser136. An NADPH-binding site is contributed by Ala138. 5 residues coordinate sn-glycerol 3-phosphate: Lys189, Asp242, Ser252, Arg253, and Asn254. Catalysis depends on Lys189, which acts as the Proton acceptor. NADPH is bound at residue Arg253. NADPH is bound by residues Val277 and Glu279.

Belongs to the NAD-dependent glycerol-3-phosphate dehydrogenase family.

It is found in the cytoplasm. The enzyme catalyses sn-glycerol 3-phosphate + NAD(+) = dihydroxyacetone phosphate + NADH + H(+). The catalysed reaction is sn-glycerol 3-phosphate + NADP(+) = dihydroxyacetone phosphate + NADPH + H(+). The protein operates within membrane lipid metabolism; glycerophospholipid metabolism. Its function is as follows. Catalyzes the reduction of the glycolytic intermediate dihydroxyacetone phosphate (DHAP) to sn-glycerol 3-phosphate (G3P), the key precursor for phospholipid synthesis. The protein is Glycerol-3-phosphate dehydrogenase [NAD(P)+] of Herminiimonas arsenicoxydans.